The following is a 698-amino-acid chain: Elongation factor G (698 aa).

The tr-type G domain maps to 10–285; it reads DKTRNIGIMA…AVVDYLPSPL (276 aa). GTP is bound by residues 19 to 26, 83 to 87, and 137 to 140; these read AHIDAGKT, DTPGH, and NKMD.

The protein belongs to the TRAFAC class translation factor GTPase superfamily. Classic translation factor GTPase family. EF-G/EF-2 subfamily.

Its subcellular location is the cytoplasm. Functionally, catalyzes the GTP-dependent ribosomal translocation step during translation elongation. During this step, the ribosome changes from the pre-translocational (PRE) to the post-translocational (POST) state as the newly formed A-site-bound peptidyl-tRNA and P-site-bound deacylated tRNA move to the P and E sites, respectively. Catalyzes the coordinated movement of the two tRNA molecules, the mRNA and conformational changes in the ribosome. In Lactiplantibacillus plantarum (strain ATCC BAA-793 / NCIMB 8826 / WCFS1) (Lactobacillus plantarum), this protein is Elongation factor G.